The primary structure comprises 138 residues: Lutropin subunit beta (138 aa).

Positions 1 to 17 are cleaved as a signal peptide; sequence LQGLLLWLLLSVGGVWA. 6 cysteine pairs are disulfide-bonded: C26–C74, C40–C89, C43–C127, C51–C105, C55–C107, and C110–C117. N30 carries an N-linked (GlcNAc...) asparagine glycan.

This sequence belongs to the glycoprotein hormones subunit beta family. Heterodimer of a common alpha chain and a unique beta chain which confers biological specificity to thyrotropin, lutropin, follitropin and gonadotropin.

It localises to the secreted. Promotes spermatogenesis and ovulation by stimulating the testes and ovaries to synthesize steroids. The chain is Lutropin subunit beta (LHB) from Canis lupus familiaris (Dog).